The chain runs to 510 residues: Olfactomedin-4 (510 aa).

The first 20 residues, 1–20, serve as a signal peptide directing secretion; the sequence is MRPGLSFLLALLFFLGQAAG. Asn72 and Asn136 each carry an N-linked (GlcNAc...) asparagine glycan. Residues 155-234 adopt a coiled-coil conformation; the sequence is DFELIKVEVK…ECEASKDQNT (80 aa). The region spanning 245–507 is the Olfactomedin-like domain; that stretch reads SCGHGGVVNI…LLNYDLSVLQ (263 aa). An intrachain disulfide couples Cys246 to Cys437. Asn253 carries N-linked (GlcNAc...) asparagine glycosylation.

In terms of assembly, homomultimer; disulfide-linked. Interacts with NDUFA13. Interacts with cell surface lectins (locutions ricinus communis agglutinin I, concanavalin-A and wheat germ agglutinin) and cadherin. Post-translationally, N-glycosylated. In terms of tissue distribution, expressed during myeloid lineage development. Much higher expression in bone marrow neutrophils than in peripheral blood neutrophils (at protein level). Strongly expressed in the prostate, small intestine and colon and moderately expressed in the bone marrow and stomach. Overexpressed in some pancreatic cancer tissues.

The protein localises to the secreted. It is found in the extracellular space. The protein resides in the mitochondrion. Functionally, may promote proliferation of pancreatic cancer cells by favoring the transition from the S to G2/M phase. In myeloid leukemic cell lines, inhibits cell growth and induces cell differentiation and apoptosis. May play a role in the inhibition of EIF4EBP1 phosphorylation/deactivation. Facilitates cell adhesion, most probably through interaction with cell surface lectins and cadherin. In Homo sapiens (Human), this protein is Olfactomedin-4 (OLFM4).